The following is a 641-amino-acid chain: Methionine--tRNA ligase (641 aa).

Residues tyrosine 13–asparagine 23 carry the 'HIGH' region motif. 4 residues coordinate Zn(2+): cysteine 128, cysteine 131, cysteine 145, and cysteine 148. The 'KMSKS' region motif lies at lysine 298–serine 302. Lysine 301 lines the ATP pocket. Residues aspartate 539 to arginine 641 enclose the tRNA-binding domain.

It belongs to the class-I aminoacyl-tRNA synthetase family. MetG type 2A subfamily. As to quaternary structure, homodimer. Zn(2+) serves as cofactor.

It is found in the cytoplasm. The enzyme catalyses tRNA(Met) + L-methionine + ATP = L-methionyl-tRNA(Met) + AMP + diphosphate. Functionally, is required not only for elongation of protein synthesis but also for the initiation of all mRNA translation through initiator tRNA(fMet) aminoacylation. The sequence is that of Methionine--tRNA ligase from Clostridium tetani (strain Massachusetts / E88).